The following is an 85-amino-acid chain: Large ribosomal subunit protein bL27 (85 aa).

A disordered region spans residues 1 to 20 (MATKKAGGSTRNGRDSEAKR).

This sequence belongs to the bacterial ribosomal protein bL27 family.

The sequence is that of Large ribosomal subunit protein bL27 from Actinobacillus pleuropneumoniae serotype 5b (strain L20).